We begin with the raw amino-acid sequence, 427 residues long: MKLQINAGPLKGNVTVPGDKSISHRALIFGSIAEGKTEIKGLLKSQDVQRTLVALRHLGVTIEESDQKVIIQGKGFSGLTAPDSPLDMGNSGTSLRLLAGLLSGQDFPVQFFGDASLSQRPMDRIVIPLREMGARVEGQGPKHLPPITVLGSSQLTAINYQMPLASAQVKSAILLAALQTKGQTQVFEKAVTRNHTEVMIKQFGGEIFQSGKEIRIIGPQTLKGQSLTIPGDISSAAFWIVAALIIPGSAISIKNVGINPTRTGIIDLVKKMGGAIELTDRDDINQSATIHVSYSKLKGTRIAGEMIPRLIDELPIIALLATQAEGTTVVQDAQELRVKETDRIQVVTSLLRKMGADIEEKTDGFVIKGKTELHSCQADAFLDHRIGMMVAIAALLVKTGEMILNGEEAIQTSYPQFFKDLESLQHD.

Positions 20, 21, and 25 each coordinate 3-phosphoshikimate. Residue Lys-20 coordinates phosphoenolpyruvate. Gly-92 and Arg-120 together coordinate phosphoenolpyruvate. 3-phosphoshikimate contacts are provided by Ser-166, Gln-168, Asp-312, and Lys-339. Gln-168 contributes to the phosphoenolpyruvate binding site. Asp-312 acts as the Proton acceptor in catalysis. Phosphoenolpyruvate-binding residues include Arg-343 and Arg-385.

Belongs to the EPSP synthase family. Monomer.

The protein resides in the cytoplasm. The enzyme catalyses 3-phosphoshikimate + phosphoenolpyruvate = 5-O-(1-carboxyvinyl)-3-phosphoshikimate + phosphate. Its pathway is metabolic intermediate biosynthesis; chorismate biosynthesis; chorismate from D-erythrose 4-phosphate and phosphoenolpyruvate: step 6/7. In terms of biological role, catalyzes the transfer of the enolpyruvyl moiety of phosphoenolpyruvate (PEP) to the 5-hydroxyl of shikimate-3-phosphate (S3P) to produce enolpyruvyl shikimate-3-phosphate and inorganic phosphate. The sequence is that of 3-phosphoshikimate 1-carboxyvinyltransferase from Streptococcus uberis (strain ATCC BAA-854 / 0140J).